The chain runs to 447 residues: NADH-ubiquinone oxidoreductase chain 4 (447 aa).

13 helical membrane-spanning segments follow: residues 4-24, 34-54, 67-87, 100-120, 149-169, 189-209, 223-243, 248-268, 279-299, 304-324, 349-371, 388-408, and 422-442; these read LLLLIMLNMLMMSMIYLFMLF, LIIGNLIIINLLLNLFNLNWI, MYSYGLIMLTLWIFGLIFISL, LLMISLLLVFLSMNLLLFYLF, MFYTMIFSLPMLYIIYYIYLI, LFIYLLMSFLVKIPIYLFHGW, MILASIMLKLGGYGMLRLMII, FILIQKILVMINSFGVLILSL, IIAISSIVHMGLMIMSMMTFL, IGGYLMMISHGLSSSGLFFLV, MSLLWFMLCSSNMGSPVSLNLIS, LILMMYCLFSFIYSIYLFMFI, and GILVEYFVLLLHWIPLNLMFL.

It belongs to the complex I subunit 4 family.

It localises to the mitochondrion membrane. It carries out the reaction a ubiquinone + NADH + 5 H(+)(in) = a ubiquinol + NAD(+) + 4 H(+)(out). Functionally, core subunit of the mitochondrial membrane respiratory chain NADH dehydrogenase (Complex I) that is believed to belong to the minimal assembly required for catalysis. Complex I functions in the transfer of electrons from NADH to the respiratory chain. The immediate electron acceptor for the enzyme is believed to be ubiquinone. The polypeptide is NADH-ubiquinone oxidoreductase chain 4 (ND4) (Apis mellifera ligustica (Common honeybee)).